The following is a 1254-amino-acid chain: AF4/FMR2 family member 3 (1254 aa).

Residues 45–62 (YEPDRNALRRKERERRSQ) show a composition bias toward basic and acidic residues. Disordered stretches follow at residues 45–90 (YEPD…GDEL), 139–190 (AESR…AAQQ), 261–324 (RPMD…GENN), 350–534 (EPSK…EGQD), and 552–752 (KTTC…SVGS). Composition is skewed to polar residues over residues 67–76 (DSGSFNSGYS) and 143–158 (AQPQPSTVCSTASSTP). A compositionally biased stretch (polar residues) spans 359–369 (KDSQLVSSGHS). Positions 406-418 (QQAAQRTALRALA) are enriched in low complexity. The span at 421–433 (SVVQQTNCRGSAP) shows a compositional bias: polar residues. A compositionally biased stretch (low complexity) spans 441–472 (SSSSGGSSSSSDSESTSGSDSETESSSSSSES). Residues 552–561 (KTTCKEEQRP) show a composition bias toward basic and acidic residues. Over residues 577–605 (SPPAAVAVTAAALPPAVPSAPTESAPAPT) the composition is skewed to low complexity. Over residues 615–633 (RRTERTSAGDGANCHRPEE) the composition is skewed to basic and acidic residues. Composition is skewed to low complexity over residues 694–704 (TESSSSSSSSD) and 732–749 (AASSNNNSNSNSSTSRAS). Ser782 is subject to Phosphoserine. A disordered region spans residues 813–883 (PGVLSAPSAK…ASTNNTLSGN (71 aa)). A compositionally biased stretch (basic and acidic residues) spans 857–869 (REIKKVQGRKESA). The span at 873–883 (AASTNNTLSGN) shows a compositional bias: polar residues. A Phosphoserine modification is found at Ser908. 2 disordered regions span residues 919–991 (ASED…HRDC) and 1128–1171 (AAQA…SGLS). Polar residues-rich tracts occupy residues 922 to 941 (DLTSSSRPHGNGLLTSASSN) and 960 to 985 (ASHNSSENGTLHSKSRPQTEPWSPGS). Low complexity-rich tracts occupy residues 1132–1146 (PSPWGSSGKSTGSPS) and 1154–1171 (PASSVGSQGSLSSSSGLS).

Belongs to the AF4 family. In terms of tissue distribution, highest levels found in lymphoid tissues, lower levels in brain and lung.

The protein resides in the nucleus. In terms of biological role, putative transcription activator that may function in lymphoid development and oncogenesis. In Mus musculus (Mouse), this protein is AF4/FMR2 family member 3 (Aff3).